A 161-amino-acid chain; its full sequence is Ribosome maturation factor RimP (161 aa).

Belongs to the RimP family.

The protein resides in the cytoplasm. Required for maturation of 30S ribosomal subunits. This is Ribosome maturation factor RimP from Pelobacter propionicus (strain DSM 2379 / NBRC 103807 / OttBd1).